Consider the following 609-residue polypeptide: Frizzled and smoothened-like protein E (609 aa).

A signal peptide spans 1-20; that stretch reads MEMIRIFLIYLILKIIIING. The Extracellular segment spans residues 21–259; sequence ENNEYSKGYG…QWKRVYDMAK (239 aa). The 158-residue stretch at 35–192 folds into the FZ domain; the sequence is FPGSKCLNYV…GLYKVPCIDP (158 aa). 4 cysteine pairs are disulfide-bonded: cysteine 40–cysteine 118, cysteine 53–cysteine 111, cysteine 100–cysteine 149, and cysteine 138–cysteine 189. N-linked (GlcNAc...) asparagine glycans are attached at residues asparagine 75, asparagine 130, asparagine 172, asparagine 198, asparagine 217, and asparagine 245. The chain crosses the membrane as a helical span at residues 260–280; the sequence is TLSSISFICACYNILTFGILN. At 281–288 the chain is on the cytoplasmic side; sequence RKRKSKYN. A helical transmembrane segment spans residues 289 to 309; the sequence is ICITLMSTSIALVYLTDIIKF. The Extracellular portion of the chain corresponds to 310–337; sequence GYGIEEFLCPEPGRSAVQNDAACGITGA. Residues 338-358 form a helical membrane-spanning segment; it reads MFHFGITYCCCWAMTMSIVLF. At 359–365 the chain is on the cytoplasmic side; sequence CSVKRIK. Residues 366 to 386 form a helical membrane-spanning segment; it reads LFYFRHFMIGNTIFTIITTVI. Over 387–408 the chain is Extracellular; sequence LLSAKKMVAGTGYIECWVRERW. The chain crosses the membrane as a helical span at residues 409–429; sequence FVITLFWLPCGIGLSIGIFCI. The Cytoplasmic segment spans residues 430–457; it reads GGVIHEIYNISKKVNIRESEFILRQIKP. The helical transmembrane segment at 458-478 threads the bilayer; the sequence is FSLVFSVAGSFLYLFIFFFDV. Residues 479 to 511 are Extracellular-facing; sequence ERKIDSYKAAVADYVLCLLSGGSEETCFTTGPN. Residues 512–532 traverse the membrane as a helical segment; sequence YASFFIFYFFIRVFGVLFFSI. Residues 533–609 are Cytoplasmic-facing; sequence YGTSRVARDI…DSKSIELEKK (77 aa). The span at 559–570 shows a compositional bias: polar residues; that stretch reads ESGISRNNSRTD. Residues 559 to 609 form a disordered region; sequence ESGISRNNSRTDISFGKNNNSKNSNNSKNSNNSKNSNNSDNDSKSIELEKK. Residues 575–598 show a composition bias toward low complexity; that stretch reads KNNNSKNSNNSKNSNNSKNSNNSD. Positions 599-609 are enriched in basic and acidic residues; sequence NDSKSIELEKK.

This sequence belongs to the G-protein coupled receptor Fz/Smo family.

The protein localises to the membrane. The sequence is that of Frizzled and smoothened-like protein E (fslE) from Dictyostelium discoideum (Social amoeba).